A 234-amino-acid chain; its full sequence is Phosphoribosylaminoimidazole-succinocarboxamide synthase (234 aa).

Belongs to the SAICAR synthetase family.

The enzyme catalyses 5-amino-1-(5-phospho-D-ribosyl)imidazole-4-carboxylate + L-aspartate + ATP = (2S)-2-[5-amino-1-(5-phospho-beta-D-ribosyl)imidazole-4-carboxamido]succinate + ADP + phosphate + 2 H(+). It functions in the pathway purine metabolism; IMP biosynthesis via de novo pathway; 5-amino-1-(5-phospho-D-ribosyl)imidazole-4-carboxamide from 5-amino-1-(5-phospho-D-ribosyl)imidazole-4-carboxylate: step 1/2. The sequence is that of Phosphoribosylaminoimidazole-succinocarboxamide synthase from Staphylococcus epidermidis (strain ATCC 35984 / DSM 28319 / BCRC 17069 / CCUG 31568 / BM 3577 / RP62A).